The following is a 238-amino-acid chain: Serine protease SplE (238 aa).

The N-terminal stretch at 1 to 36 is a signal peptide; the sequence is MNKNIIIKSIAALTILTSVTGVGTTMVEGIQQTAKA. Catalysis depends on charge relay system residues H75, D113, and S191.

The protein belongs to the peptidase S1B family.

Its subcellular location is the secreted. In Staphylococcus aureus, this protein is Serine protease SplE (splE).